The primary structure comprises 620 residues: MSFDIAKYPTLALVDSTQELRLLPKESLPKLCDELRRYLLDSVSRSSGHFASGLGTVELTVALHYVYNTPFDQLIWDVGHQAYPHKILTGRRDKIGTIRQKGGLHPFPWRGESEYDVLSVGHSSTSISAGIGIAVAAEKEGKNRRTVCVIGDGAITAGMAFEAMNHAGDIRPDMLVILNDNEMSISENVGALNNHLAQLLSGKLYSSLREGGKKVFSGVPPIKELLKRTEEHIKGMVVPGTLFEELGFNYIGPVDGHDVLGLITTLKNMRDLKGPQFLHIMTKKGRGYEPAEKDPITFHAVPKFDPSSGCLPKSSGGLPSYSKIFGDWLCETAAKDNKLMAITPAMREGSGMVEFSRKFPDRYFDVAIAEQHAVTFAAGLAIGGYKPIVAIYSTFLQRAYDQVLHDVAIQKLPVLFAIDRAGIVGADGQTHQGAFDLSYLRCIPEMVIMTPSDENECRQMLYTGYHYNDGPSAVRYPRGNAVGVELTPLEKLPIGKGIVKRRGEKLAILNFGTLMPEAAKVAESLNATLVDMRFVKPLDEALILEMAASHEALVTVEENAIMGGAGSGVNEVLMAHRKPVPVLNIGLPDFFIPQGTQEEMRAELGLDAAGMEAKIKAWLA.

Residues histidine 80 and 121-123 contribute to the thiamine diphosphate site; that span reads GHS. Aspartate 152 lines the Mg(2+) pocket. Thiamine diphosphate is bound by residues 153-154, asparagine 181, tyrosine 288, and glutamate 370; that span reads GA. Asparagine 181 is a binding site for Mg(2+).

The protein belongs to the transketolase family. DXPS subfamily. As to quaternary structure, homodimer. It depends on Mg(2+) as a cofactor. Thiamine diphosphate serves as cofactor.

It carries out the reaction D-glyceraldehyde 3-phosphate + pyruvate + H(+) = 1-deoxy-D-xylulose 5-phosphate + CO2. The protein operates within metabolic intermediate biosynthesis; 1-deoxy-D-xylulose 5-phosphate biosynthesis; 1-deoxy-D-xylulose 5-phosphate from D-glyceraldehyde 3-phosphate and pyruvate: step 1/1. In terms of biological role, catalyzes the acyloin condensation reaction between C atoms 2 and 3 of pyruvate and glyceraldehyde 3-phosphate to yield 1-deoxy-D-xylulose-5-phosphate (DXP). The chain is 1-deoxy-D-xylulose-5-phosphate synthase from Escherichia coli (strain K12 / MC4100 / BW2952).